Reading from the N-terminus, the 292-residue chain is Homoserine kinase (292 aa).

Residue 84 to 94 coordinates ATP; sequence PLSRGLGSSSA.

Belongs to the GHMP kinase family. Homoserine kinase subfamily.

It is found in the cytoplasm. The catalysed reaction is L-homoserine + ATP = O-phospho-L-homoserine + ADP + H(+). Its pathway is amino-acid biosynthesis; L-threonine biosynthesis; L-threonine from L-aspartate: step 4/5. Its function is as follows. Catalyzes the ATP-dependent phosphorylation of L-homoserine to L-homoserine phosphate. The sequence is that of Homoserine kinase from Campylobacter jejuni subsp. jejuni serotype O:6 (strain 81116 / NCTC 11828).